Reading from the N-terminus, the 420-residue chain is Protein translocase subunit SecY (420 aa).

Transmembrane regions (helical) follow at residues 9-29 (ILITLGFLFLYRVLAYIPIPG), 61-81 (LSIISLGIMPYITSSIIMELL), 104-124 (IVRYLTILITLIQAVSVSVGL), 141-161 (VFMIVSAFSMLTGTMLLMWIG), 173-193 (ISLIIFAGIVSGIPSAISGTF), 203-223 (ILMLIGIVLIVLATIFAIIYV), 257-277 (LSGVIPPIFASALLVFPSTIL), 300-320 (YNILMFLLIIFFAYFYSSIVF), 355-375 (KLTLWGSLYLALISTVPWILV), and 377-397 (AMGVPFYFGGTAVLIVVQVAI).

Belongs to the SecY/SEC61-alpha family. As to quaternary structure, component of the Sec protein translocase complex. Heterotrimer consisting of SecY, SecE and SecG subunits. The heterotrimers can form oligomers, although 1 heterotrimer is thought to be able to translocate proteins. Interacts with the ribosome. Interacts with SecDF, and other proteins may be involved. Interacts with SecA.

The protein resides in the cell inner membrane. The central subunit of the protein translocation channel SecYEG. Consists of two halves formed by TMs 1-5 and 6-10. These two domains form a lateral gate at the front which open onto the bilayer between TMs 2 and 7, and are clamped together by SecE at the back. The channel is closed by both a pore ring composed of hydrophobic SecY resides and a short helix (helix 2A) on the extracellular side of the membrane which forms a plug. The plug probably moves laterally to allow the channel to open. The ring and the pore may move independently. In Helicobacter pylori (strain J99 / ATCC 700824) (Campylobacter pylori J99), this protein is Protein translocase subunit SecY.